The chain runs to 234 residues: NAD-dependent protein deacetylase (234 aa).

Positions 1-234 (MSDITAAQTT…AVDFFEGVQV (234 aa)) constitute a Deacetylase sirtuin-type domain. Residues A23, T27, R35, Q99, I101, D102, H117, T184, S185, N208, and V226 each contribute to the NAD(+) site. The nicotinamide site is built by I101 and D102. H117 (proton acceptor) is an active-site residue.

This sequence belongs to the sirtuin family. Class U subfamily.

It localises to the cytoplasm. It carries out the reaction N(6)-acetyl-L-lysyl-[protein] + NAD(+) + H2O = 2''-O-acetyl-ADP-D-ribose + nicotinamide + L-lysyl-[protein]. In terms of biological role, NAD-dependent protein deacetylase which modulates the activities of several enzymes which are inactive in their acetylated form. In Lactiplantibacillus plantarum (strain ATCC BAA-793 / NCIMB 8826 / WCFS1) (Lactobacillus plantarum), this protein is NAD-dependent protein deacetylase.